The primary structure comprises 76 residues: Defensin-like protein 163 (76 aa).

The N-terminal stretch at 1–27 (MAKLIYSYLFISMFVLSVLLALPNAEG) is a signal peptide. 4 cysteine pairs are disulfide-bonded: Cys-33–Cys-76, Cys-43–Cys-62, Cys-48–Cys-70, and Cys-52–Cys-72.

Belongs to the DEFL family.

Its subcellular location is the secreted. This chain is Defensin-like protein 163 (LCR24), found in Arabidopsis thaliana (Mouse-ear cress).